The sequence spans 228 residues: MNFIYQKKSPKTKEIEQLAKTQNIKIIRINTNELDKILKNKDHRGFALKLKLEKNKNVKTQTKDFENLLETFKKKENAFILLLDEIEDPQNFGAILRTAEQFSIDLVITTQKRSAKDNSTVLRTSSGASQYVKKMTVTNINNTINLLKNYGFWIYTGDIKGQDINKIKINDKKIALILGNEGKGVHKLIKENSDFLIRIPTSGKIDSLNVSVSTGILIFEIKRQLNLL.

S-adenosyl-L-methionine contacts are provided by Gly-179, Ile-199, and Leu-208.

This sequence belongs to the class IV-like SAM-binding methyltransferase superfamily. RNA methyltransferase TrmH family.

This is an uncharacterized protein from Borreliella burgdorferi (strain ATCC 35210 / DSM 4680 / CIP 102532 / B31) (Borrelia burgdorferi).